The chain runs to 129 residues: Glycine cleavage system H protein (129 aa).

Residues 24 to 106 (TYTVGITEHA…YAGGWIFKIK (83 aa)) form the Lipoyl-binding domain. Position 65 is an N6-lipoyllysine (K65).

This sequence belongs to the GcvH family. In terms of assembly, the glycine cleavage system is composed of four proteins: P, T, L and H. (R)-lipoate serves as cofactor.

The glycine cleavage system catalyzes the degradation of glycine. The H protein shuttles the methylamine group of glycine from the P protein to the T protein. This is Glycine cleavage system H protein from Escherichia fergusonii (strain ATCC 35469 / DSM 13698 / CCUG 18766 / IAM 14443 / JCM 21226 / LMG 7866 / NBRC 102419 / NCTC 12128 / CDC 0568-73).